A 522-amino-acid polypeptide reads, in one-letter code: Sorting nexin-1 (522 aa).

A disordered region spans residues 1-144 (MASGGGGCSA…EEEEQEDQFD (144 aa)). A phosphoserine mark is found at serine 32 and serine 39. Acidic residues predominate over residues 35 to 45 (EAGDSDTEGED). Phosphothreonine occurs at positions 41 and 48. A compositionally biased stretch (polar residues) spans 55–65 (KPQSPKKTTSL). Serine 58 and serine 72 each carry phosphoserine. The segment covering 71-80 (GSKENGIHED) has biased composition (basic and acidic residues). Over residues 98–125 (LDSTQNNQKTMPGKTLTSHSPQEATNSP) the composition is skewed to polar residues. Positions 132 to 143 (EELEEEEQEDQF) are enriched in acidic residues. A PX domain is found at 143–272 (FDLTVGITDP…EFLEKEELPR (130 aa)). The a 1,2-diacyl-sn-glycero-3-phospho-(1D-myo-inositol-3-phosphate) site is built by arginine 186, serine 188, and lysine 214. Residue serine 188 is modified to Phosphoserine. Lysine 237 is modified (N6-acetyllysine). Arginine 238 is a binding site for a 1,2-diacyl-sn-glycero-3-phospho-(1D-myo-inositol-3-phosphate). Position 280 is a phosphoserine (serine 280). Positions 281–298 (GAGLLKMFNKATDAVSKM) are membrane-binding amphipathic helix. The 221-residue stretch at 302–522 (MNESDIWFEE…AFLPEAKAIS (221 aa)) folds into the BAR domain.

It belongs to the sorting nexin family. In terms of assembly, predominantly forms heterodimers with BAR domain-containing sorting nexins SNX5, SNX6 and SNX32. Can self-associate to form homodimers. The heterodimers are proposed to self-assemble into helical arrays on the membrane to stabilize and expand local membrane curvature underlying endosomal tubule formation. Thought to be a component of the originally described retromer complex (also called SNX-BAR retromer) which is a pentamer containing the heterotrimeric retromer cargo-selective complex (CSC), also described as vacuolar protein sorting subcomplex (VPS) and a heterodimeric membrane-deforming subcomplex formed between SNX1 or SNX2 and SNX5 or SNX6 (also called SNX-BAR subcomplex); the respective CSC and SNX-BAR subcomplexes associate with low affinity. Interacts with SNX5, SNX6, SNX32, VPS26A, VPS29, VPS35, DRD5, DENND5A, KALRN, RHOG (GDP-bound form). The interaction with SNX2 is reported controversially. Interacts with DNAJC13; prevented by presence of HGS. Interacts with HGS.

It is found in the endosome membrane. It localises to the golgi apparatus. The protein localises to the trans-Golgi network membrane. Its subcellular location is the early endosome membrane. The protein resides in the cell projection. It is found in the lamellipodium. Its function is as follows. Involved in several stages of intracellular trafficking. Interacts with membranes containing phosphatidylinositol 3-phosphate (PtdIns(3P)) or phosphatidylinositol 3,5-bisphosphate (PtdIns(3,5)P2). Acts in part as component of the retromer membrane-deforming SNX-BAR subcomplex. The SNX-BAR retromer mediates retrograde transport of cargo proteins from endosomes to the trans-Golgi network (TGN) and is involved in endosome-to-plasma membrane transport for cargo protein recycling. The SNX-BAR subcomplex functions to deform the donor membrane into a tubular profile called endosome-to-TGN transport carrier (ETC). Can sense membrane curvature and has in vitro vesicle-to-membrane remodeling activity. Involved in retrograde endosome-to-TGN transport of lysosomal enzyme receptors (IGF2R, M6PR and SORT1). Plays a role in targeting ligand-activated EGFR to the lysosomes for degradation after endocytosis from the cell surface and release from the Golgi. Involvement in retromer-independent endocytic trafficking of P2RY1 and lysosomal degradation of protease-activated receptor-1/F2R. Promotes KALRN- and RHOG-dependent but retromer-independent membrane remodeling such as lamellipodium formation; the function is dependent on GEF activity of KALRN. Required for endocytosis of DRD5 upon agonist stimulation but not for basal receptor trafficking. This chain is Sorting nexin-1 (Snx1), found in Mus musculus (Mouse).